Here is a 402-residue protein sequence, read N- to C-terminus: Triose phosphate/phosphate translocator, chloroplastic (402 aa).

A chloroplast-targeting transit peptide spans 1 to 72 (MESRVLSRAT…KGASLLRPCP (72 aa)). Residues 73–96 (ATAGGNDSAGEEKVAPVGFFSRYP) are Chloroplast intermembrane-facing. A helical transmembrane segment spans residues 97-117 (ALTTGFFFFTWYFLNVIFNIL). At 118-129 (NKKIYNYFPYPY) the chain is on the lumenal side. A helical membrane pass occupies residues 130-150 (FVSVIHLAVGVVYCLVSWTVG). Topologically, residues 151 to 207 (LPKRAPIDGNLLKLLIPVAVCHALGHVTSNVSFAAVAVSFTHTVKALEPFFNAAASQ) are chloroplast intermembrane. A helical transmembrane segment spans residues 208–228 (FILGQSIPITLWLSLAPVVIG). Over 229 to 272 (VSMASLTELSFNWLGFISAMISNISFTYRSIYSKKAMTDMDSTN) the chain is Lumenal. The helical transmembrane segment at 273–292 (IYAYISIIALIVCIPPALII) threads the bilayer. At 293–370 (EGPTLLKTGF…IIFGNKISTQ (78 aa)) the chain is on the chloroplast intermembrane side. The helical transmembrane segment at 371–391 (TGIGTGIAIAGVALYSFIKAQ) threads the bilayer. Topologically, residues 392-402 (IEEEKRQAKAA) are lumenal.

Belongs to the TPT transporter family. TPT (TC 2.A.7.9) subfamily. Homodimer.

It localises to the plastid. The protein resides in the chloroplast membrane. Its function is as follows. Mediates the export of fixed carbons from the chloroplasts into the cytosol in the form of triose phosphates. The sequence is that of Triose phosphate/phosphate translocator, chloroplastic from Pisum sativum (Garden pea).